Consider the following 205-residue polypeptide: Ribosomal RNA small subunit methyltransferase G 1 (205 aa).

S-adenosyl-L-methionine is bound by residues Gly-77, Leu-82, 100-102, 129-130, and Arg-138; these read EKS and LE.

The protein belongs to the methyltransferase superfamily. RNA methyltransferase RsmG family.

Its subcellular location is the cytoplasm. The catalysed reaction is guanosine(527) in 16S rRNA + S-adenosyl-L-methionine = N(7)-methylguanosine(527) in 16S rRNA + S-adenosyl-L-homocysteine. In terms of biological role, specifically methylates the N7 position of guanine in position 527 of 16S rRNA. The sequence is that of Ribosomal RNA small subunit methyltransferase G 1 from Bdellovibrio bacteriovorus (strain ATCC 15356 / DSM 50701 / NCIMB 9529 / HD100).